Consider the following 377-residue polypeptide: GTPase Obg (377 aa).

In terms of domain architecture, Obg spans 1 to 159 (MKFVDEATIE…RRLRMELKVL (159 aa)). Positions 127–148 (NIHFKSSTNRAPRQWTPGKEGE) are disordered. The OBG-type G domain maps to 160–336 (ADVGLLGLPN…LIWALQDYLD (177 aa)). Residues 166–173 (GLPNAGKS), 191–195 (FTTLH), 213–216 (DIPG), 288–291 (NKLD), and 317–319 (SGL) each bind GTP. 2 residues coordinate Mg(2+): serine 173 and threonine 193. Positions 339–377 (KRKDQDAQDQADGTYVFEDPRFDASRGGAAPATPPGGDE) are disordered.

Belongs to the TRAFAC class OBG-HflX-like GTPase superfamily. OBG GTPase family. As to quaternary structure, monomer. It depends on Mg(2+) as a cofactor.

It localises to the cytoplasm. Functionally, an essential GTPase which binds GTP, GDP and possibly (p)ppGpp with moderate affinity, with high nucleotide exchange rates and a fairly low GTP hydrolysis rate. Plays a role in control of the cell cycle, stress response, ribosome biogenesis and in those bacteria that undergo differentiation, in morphogenesis control. The chain is GTPase Obg from Bordetella bronchiseptica (strain ATCC BAA-588 / NCTC 13252 / RB50) (Alcaligenes bronchisepticus).